Reading from the N-terminus, the 518-residue chain is Sensory neuron membrane protein 1 (518 aa).

The Cytoplasmic portion of the chain corresponds to Met1 to Gly8. A helical transmembrane segment spans residues Ile9–Leu29. Over Ile30–Asp456 the chain is Extracellular. 6 N-linked (GlcNAc...) asparagine glycosylation sites follow: Asn64, Asn186, Asn225, Asn316, Asn334, and Asn381. Cystine bridges form between Cys265-Cys330, Cys294-Cys349, and Cys332-Cys338. A helical transmembrane segment spans residues Val457–Tyr477. Topologically, residues Tyr478–Asn518 are cytoplasmic.

It belongs to the CD36 family.

Its subcellular location is the cell membrane. Its function is as follows. Plays an olfactory role that is not restricted to pheromone sensitivity. The sequence is that of Sensory neuron membrane protein 1 from Pediculus humanus subsp. corporis (Body louse).